We begin with the raw amino-acid sequence, 161 residues long: Succinate dehydrogenase assembly factor 2, mitochondrial (161 aa).

The N-terminal 31 residues, 1–31 (MSLLRVTRSSGHLSAVCRLPARSISTTSILL), are a transit peptide targeting the mitochondrion.

The protein belongs to the SDHAF2 family. As to quaternary structure, interacts with the flavoprotein subunit within the SDH catalytic dimer.

It localises to the mitochondrion matrix. Plays an essential role in the assembly of succinate dehydrogenase (SDH), an enzyme complex (also referred to as respiratory complex II) that is a component of both the tricarboxylic acid (TCA) cycle and the mitochondrial electron transport chain, and which couples the oxidation of succinate to fumarate with the reduction of ubiquinone (coenzyme Q) to ubiquinol. Required for flavinylation (covalent attachment of FAD) of the flavoprotein subunit of the SDH catalytic dimer. This Aedes aegypti (Yellowfever mosquito) protein is Succinate dehydrogenase assembly factor 2, mitochondrial.